We begin with the raw amino-acid sequence, 387 residues long: Galactokinase (387 aa).

33-36 serves as a coordination point for substrate; the sequence is EHTD. ATP-binding positions include serine 67 and 124 to 130; that span reads GAGLSSS. Residues serine 130 and glutamate 162 each contribute to the Mg(2+) site. Aspartate 174 serves as the catalytic Proton acceptor. Tyrosine 224 contacts substrate.

It belongs to the GHMP kinase family. GalK subfamily.

The protein localises to the cytoplasm. The catalysed reaction is alpha-D-galactose + ATP = alpha-D-galactose 1-phosphate + ADP + H(+). The protein operates within carbohydrate metabolism; galactose metabolism. Catalyzes the transfer of the gamma-phosphate of ATP to D-galactose to form alpha-D-galactose-1-phosphate (Gal-1-P). The polypeptide is Galactokinase (Lactiplantibacillus plantarum (strain ATCC BAA-793 / NCIMB 8826 / WCFS1) (Lactobacillus plantarum)).